A 205-amino-acid polypeptide reads, in one-letter code: Non-structural protein NS3 (205 aa).

Residues 177-205 are disordered; sequence GTRSPETGCRKVTSGLPHGASGGSGTRQG. Gly residues predominate over residues 196–205; the sequence is ASGGSGTRQG.

Belongs to the orbivirus NS3 family.

In terms of biological role, may play a role in the release of virions from infected cells. This is Non-structural protein NS3 (Segment-10) from Broadhaven virus (BRD).